Reading from the N-terminus, the 105-residue chain is Protein Rev (105 aa).

The residue at position 5 (Ser-5) is a Phosphoserine; by host CK2. The homomultimerization stretch occupies residues 18–26 (IIKILYQSN). Residues 24 to 35 (QSNPYPDSSQGT) are compositionally biased toward polar residues. Disordered regions lie at residues 24–49 (QSNP…WRAR) and 65–105 (LGGP…ATTE). The Nuclear localization signal and RNA-binding (RRE) motif lies at 35-51 (TRQARRNRRRRWRARQR). Residues 37 to 49 (QARRNRRRRWRAR) show a composition bias toward basic residues. Residues 74 to 85 (LPLPPLGRLTLD) carry the Nuclear export signal and binding to XPO1 motif. The segment covering 95-105 (TESQQGTATTE) has biased composition (polar residues).

It belongs to the HIV-1 REV protein family. Homomultimer; when bound to the RRE. Multimeric assembly is essential for activity and may involve XPO1. Binds to human KPNB1, XPO1, TNPO1, RANBP5 and IPO7. Interacts with the viral Integrase. Interacts with human KHDRBS1. Interacts with human NAP1; this interaction decreases Rev multimerization and stimulates its activity. Interacts with human DEAD-box helicases DDX3 and DDX24; these interactions may serve for viral RNA export to the cytoplasm and packaging, respectively. Interacts with human PSIP1; this interaction may inhibit HIV-1 DNA integration by promoting dissociation of the Integrase-LEDGF/p75 complex. Asymmetrically arginine dimethylated at one site by host PRMT6. Methylation impairs the RNA-binding activity and export of viral RNA from the nucleus to the cytoplasm. Post-translationally, phosphorylated by protein kinase CK2. Presence of, and maybe binding to the N-terminus of the regulatory beta subunit of CK2 is necessary for CK2-mediated Rev's phosphorylation.

It localises to the host nucleus. It is found in the host nucleolus. Its subcellular location is the host cytoplasm. Escorts unspliced or incompletely spliced viral pre-mRNAs (late transcripts) out of the nucleus of infected cells. These pre-mRNAs carry a recognition sequence called Rev responsive element (RRE) located in the env gene, that is not present in fully spliced viral mRNAs (early transcripts). This function is essential since most viral proteins are translated from unspliced or partially spliced pre-mRNAs which cannot exit the nucleus by the pathway used by fully processed cellular mRNAs. Rev itself is translated from a fully spliced mRNA that readily exits the nucleus. Rev's nuclear localization signal (NLS) binds directly to KPNB1/Importin beta-1 without previous binding to KPNA1/Importin alpha-1. KPNB1 binds to the GDP bound form of RAN (Ran-GDP) and targets Rev to the nucleus. In the nucleus, the conversion from Ran-GDP to Ran-GTP dissociates Rev from KPNB1 and allows Rev's binding to the RRE in viral pre-mRNAs. Rev multimerization on the RRE via cooperative assembly exposes its nuclear export signal (NES) to the surface. Rev can then form a complex with XPO1/CRM1 and Ran-GTP, leading to nuclear export of the complex. Conversion from Ran-GTP to Ran-GDP mediates dissociation of the Rev/RRE/XPO1/RAN complex, so that Rev can return to the nucleus for a subsequent round of export. Beside KPNB1, also seems to interact with TNPO1/Transportin-1, RANBP5/IPO5 and IPO7/RANBP7 for nuclear import. The nucleoporin-like HRB/RIP is an essential cofactor that probably indirectly interacts with Rev to release HIV RNAs from the perinuclear region to the cytoplasm. This chain is Protein Rev, found in Homo sapiens (Human).